A 215-amino-acid chain; its full sequence is Cytochrome b6 (215 aa).

Residues 32 to 52 (IFYCIGGITFTCFLVQVATGF) traverse the membrane as a helical segment. Cysteine 35 serves as a coordination point for heme c. Heme b-binding residues include histidine 86 and histidine 100. Transmembrane regions (helical) follow at residues 90–110 (ASMMVLMMILHVCRVYLTGGF), 116–136 (LTWVTGVIMAVCTVSFGVTGY), and 186–206 (LHTFVLPLATAVFMLMHFLMI). Residues histidine 187 and histidine 202 each contribute to the heme b site.

This sequence belongs to the cytochrome b family. PetB subfamily. In terms of assembly, the 4 large subunits of the cytochrome b6-f complex are cytochrome b6, subunit IV (17 kDa polypeptide, PetD), cytochrome f and the Rieske protein, while the 4 small subunits are PetG, PetL, PetM and PetN. The complex functions as a dimer. Heme b is required as a cofactor. Requires heme c as cofactor.

The protein resides in the plastid. Its subcellular location is the chloroplast thylakoid membrane. In terms of biological role, component of the cytochrome b6-f complex, which mediates electron transfer between photosystem II (PSII) and photosystem I (PSI), cyclic electron flow around PSI, and state transitions. The protein is Cytochrome b6 of Chlorella vulgaris (Green alga).